We begin with the raw amino-acid sequence, 148 residues long: U2 snRNP component IST3 (148 aa).

Residues 31–109 (AYIYIGNLNR…RALKIDHTFY (79 aa)) form the RRM domain.

Belongs to the IST3 family. As to quaternary structure, component of the 45S U1.U2.U4/U6.U5 penta-snRNP particle, a subcomplex of the spliceosome. Belongs to the CWC complex (or CEF1-associated complex), a spliceosome sub-complex reminiscent of a late-stage spliceosome composed of the U2, U5 and U6 snRNAs and at least BUD13, BUD31, BRR2, CDC40, CEF1, CLF1, CUS1, CWC2, CWC15, CWC21, CWC22, CWC23, CWC24, CWC25, CWC27, ECM2, HSH155, IST3, ISY1, LEA1, MSL1, NTC20, PRP8, PRP9, PRP11, PRP19, PRP21, PRP22, PRP45, PRP46, SLU7, SMB1, SMD1, SMD2, SMD3, SMX2, SMX3, SNT309, SNU114, SPP2, SYF1, SYF2, RSE1 and YJU2. Belongs to the pre-mRNA retention and splicing (RES) complex composed of at least BUD13, IST3 and PML1. Subunit of the U2 snRNP. Interacts with RDS3.

It localises to the cytoplasm. It is found in the nucleus. Functionally, required for pre-mRNA splicing and spliceosome assembly. As part of the pre-mRNA retention and splicing (RES) complex, required for nuclear pre-mRNA retention and efficient splicing. Required for MER1-activated splicing. This chain is U2 snRNP component IST3 (IST3), found in Saccharomyces cerevisiae (strain ATCC 204508 / S288c) (Baker's yeast).